Consider the following 273-residue polypeptide: Dermonecrotic toxin LdSicTox-alphaIB3aii (273 aa).

The active site involves His-5. Mg(2+) is bound by residues Glu-25 and Asp-27. The active-site Nucleophile is His-41. Intrachain disulfides connect Cys-45–Cys-51 and Cys-47–Cys-190. Asp-85 contributes to the Mg(2+) binding site.

This sequence belongs to the arthropod phospholipase D family. Class II subfamily. Mg(2+) is required as a cofactor. In terms of tissue distribution, expressed by the venom gland.

It localises to the secreted. It carries out the reaction an N-(acyl)-sphingosylphosphocholine = an N-(acyl)-sphingosyl-1,3-cyclic phosphate + choline. It catalyses the reaction an N-(acyl)-sphingosylphosphoethanolamine = an N-(acyl)-sphingosyl-1,3-cyclic phosphate + ethanolamine. The enzyme catalyses a 1-acyl-sn-glycero-3-phosphocholine = a 1-acyl-sn-glycero-2,3-cyclic phosphate + choline. The catalysed reaction is a 1-acyl-sn-glycero-3-phosphoethanolamine = a 1-acyl-sn-glycero-2,3-cyclic phosphate + ethanolamine. Dermonecrotic toxins cleave the phosphodiester linkage between the phosphate and headgroup of certain phospholipids (sphingolipid and lysolipid substrates), forming an alcohol (often choline) and a cyclic phosphate. This toxin acts on sphingomyelin (SM). It may also act on ceramide phosphoethanolamine (CPE), lysophosphatidylcholine (LPC) and lysophosphatidylethanolamine (LPE), but not on lysophosphatidylserine (LPS), and lysophosphatidylglycerol (LPG). It acts by transphosphatidylation, releasing exclusively cyclic phosphate products as second products. Induces dermonecrosis, hemolysis, increased vascular permeability, edema, inflammatory response, and platelet aggregation. This chain is Dermonecrotic toxin LdSicTox-alphaIB3aii, found in Loxosceles deserta (Desert recluse spider).